The primary structure comprises 202 residues: LexA repressor (202 aa).

A DNA-binding region (H-T-H motif) is located at residues 28–48 (RAEIAQRLGFRSPNAAEEHLK). Active-site for autocatalytic cleavage activity residues include Ser119 and Lys156.

The protein belongs to the peptidase S24 family. As to quaternary structure, homodimer.

The catalysed reaction is Hydrolysis of Ala-|-Gly bond in repressor LexA.. Its function is as follows. Represses a number of genes involved in the response to DNA damage (SOS response), including recA and lexA. Binds to the 16 bp palindromic sequence 5'-CTGTATATATATACAG-3'. In the presence of single-stranded DNA, RecA interacts with LexA causing an autocatalytic cleavage which disrupts the DNA-binding part of LexA, leading to derepression of the SOS regulon and eventually DNA repair. The protein is LexA repressor of Citrobacter koseri (strain ATCC BAA-895 / CDC 4225-83 / SGSC4696).